We begin with the raw amino-acid sequence, 452 residues long: Cell division protein FtsZ (452 aa).

Residues 24-28 (GAGSN), 111-113 (GTG), E142, R146, and D190 contribute to the GTP site. The segment at 432–452 (DQDNKESDIHDIPAFLRKKRD) is disordered. Positions 433–442 (QDNKESDIHD) are enriched in basic and acidic residues.

Belongs to the FtsZ family. Homodimer. Polymerizes to form a dynamic ring structure in a strictly GTP-dependent manner. Interacts directly with several other division proteins.

The protein localises to the cytoplasm. Its function is as follows. Essential cell division protein that forms a contractile ring structure (Z ring) at the future cell division site. The regulation of the ring assembly controls the timing and the location of cell division. One of the functions of the FtsZ ring is to recruit other cell division proteins to the septum to produce a new cell wall between the dividing cells. Binds GTP and shows GTPase activity. In Rickettsia conorii (strain ATCC VR-613 / Malish 7), this protein is Cell division protein FtsZ.